The primary structure comprises 181 residues: Large ribosomal subunit protein uL5 (181 aa).

It belongs to the universal ribosomal protein uL5 family. As to quaternary structure, part of the 50S ribosomal subunit; part of the 5S rRNA/L5/L18/L25 subcomplex. Contacts the 5S rRNA and the P site tRNA. Forms a bridge to the 30S subunit in the 70S ribosome.

In terms of biological role, this is one of the proteins that bind and probably mediate the attachment of the 5S RNA into the large ribosomal subunit, where it forms part of the central protuberance. In the 70S ribosome it contacts protein S13 of the 30S subunit (bridge B1b), connecting the 2 subunits; this bridge is implicated in subunit movement. Contacts the P site tRNA; the 5S rRNA and some of its associated proteins might help stabilize positioning of ribosome-bound tRNAs. This is Large ribosomal subunit protein uL5 from Helicobacter pylori (strain J99 / ATCC 700824) (Campylobacter pylori J99).